Here is a 280-residue protein sequence, read N- to C-terminus: Capsid fiber protein (280 aa).

The protein belongs to the phi29likevirus major capsid fiber protein family. As to quaternary structure, homotrimer. Forms a super helix coiled coil in the homotrimer.

The protein localises to the virion. Its function is as follows. Protein that forms the 55 capsid fibers. These fibers are not always present and may have been lost in some lab strains. They may enhance the attachment of the virions onto the host cell wall. The polypeptide is Capsid fiber protein (8.5) (Bacillus subtilis (Bacteriophage PZA)).